The chain runs to 79 residues: CDC42 small effector protein 1 (79 aa).

Residues C10 and C11 are each lipidated (S-palmitoyl cysteine). Residues 30 to 43 (IGEPMNFVHLTHIG) form the CRIB domain. Positions 48-79 (GAGDGLAMTGAVQEQMRSKGNRDRPWSNSRAL) are disordered. The segment covering 63–72 (MRSKGNRDRP) has biased composition (basic and acidic residues).

Belongs to the CDC42SE/SPEC family. In terms of assembly, interacts with CDC42 (in GTP-bound form). Interacts weakly with RAC1 and not at all with RHOA.

It is found in the cytoplasm. The protein localises to the cytoskeleton. The protein resides in the cell membrane. Its function is as follows. Probably involved in the organization of the actin cytoskeleton by acting downstream of CDC42, inducing actin filament assembly. Alters CDC42-induced cell shape changes. In activated T-cells, may play a role in CDC42-mediated F-actin accumulation at the immunological synapse. May play a role in early contractile events in phagocytosis in macrophages. This Rattus norvegicus (Rat) protein is CDC42 small effector protein 1 (Cdc42se1).